The following is a 294-amino-acid chain: MQPRRQRLPAPWSGPRGPRPTAPLLALLLLLAPVAAPAGSGDPDDPGQPQDAGVPRRLLQQAARAALHFFNFRSGSPSALRVLAEVQEGRAWINPKEGCKVHVVFSTERYNPESLLQEGEGRLGKCSARVFFKNQKPRPTINVTCTRLIEKKKRQQEDYLLYKQMKQLKNPLEIVSIPDNHGHIDPSLRLIWDLAFLGSSYVMWEMTTQVSHYYLAQLTSVRQWKTNDDTIDFDYTVLLHELSTQEIIPCRIHLVWYPGKPLKVKYHCQELQTPEEASGTEEGSAVVPTELSNF.

Over 1 to 20 the chain is Lumenal; the sequence is MQPRRQRLPAPWSGPRGPRP. A helical; Signal-anchor for type III membrane protein transmembrane segment spans residues 21-42; it reads TAPLLALLLLLAPVAAPAGSGD. Cystatin LXN-type domains are found at residues 38–153 and 173–276; these read AGSG…EKKK and EIVS…TPEE. O-linked (Xyl...) (chondroitin sulfate) serine glycosylation occurs at serine 40. At 43–294 the chain is on the cytoplasmic side; sequence PDDPGQPQDA…AVVPTELSNF (252 aa). The tract at residues 273–294 is disordered; sequence TPEEASGTEEGSAVVPTELSNF.

This sequence belongs to the protease inhibitor I47 (latexin) family. Interacts with AGBL2, KIF11 and MAPRE1. Not N-glycosylated. O-glycosylated; contains chondroitin sulfate. As to expression, detected in urine (at protein level).

It is found in the membrane. It localises to the secreted. Its function is as follows. Inhibitor of the cytoplasmic carboxypeptidase AGBL2, may regulate the alpha-tubulin tyrosination cycle. The polypeptide is Retinoic acid receptor responder protein 1 (RARRES1) (Homo sapiens (Human)).